A 199-amino-acid polypeptide reads, in one-letter code: Thioredoxin reductase-like selenoprotein T (199 aa).

Residues Met-1–Ser-24 form the signal peptide. The cysteinyl-selenocysteine (Cys-Sec) cross-link spans Cys-50 to Sec-53. Sec-53 is a non-standard amino acid (selenocysteine). A helical transmembrane segment spans residues Val-95–Gly-115.

It belongs to the SelWTH family. Selenoprotein T subfamily. In terms of processing, may contain a selenide-sulfide bond between Cys-50 and Sec-53. This bond is speculated to serve as redox-active pair.

Its subcellular location is the endoplasmic reticulum membrane. The enzyme catalyses [thioredoxin]-dithiol + NADP(+) = [thioredoxin]-disulfide + NADPH + H(+). Its function is as follows. Selenoprotein with thioredoxin reductase-like oxidoreductase activity. The sequence is that of Thioredoxin reductase-like selenoprotein T from Gallus gallus (Chicken).